Reading from the N-terminus, the 78-residue chain is Large ribosomal subunit protein eL20 (78 aa).

This sequence belongs to the eukaryotic ribosomal protein eL20 family. In terms of assembly, part of the 50S ribosomal subunit. Binds 23S rRNA.

This chain is Large ribosomal subunit protein eL20, found in Thermococcus sibiricus (strain DSM 12597 / MM 739).